Consider the following 317-residue polypeptide: Large ribosomal subunit protein uL10 (317 aa).

Over residues 280 to 290 (SASAAPAAGGA) the composition is skewed to low complexity. The tract at residues 280–317 (SASAAPAAGGATEKKEEAKKPESESEEEDDDMGFGLFD) is disordered. A compositionally biased stretch (basic and acidic residues) spans 291–302 (TEKKEEAKKPES). At S302 the chain carries Phosphoserine. S304 bears the Phosphoserine; by CK1 mark.

Belongs to the universal ribosomal protein uL10 family. P0 forms a pentameric complex by interaction with dimers of P1 and P2.

The protein localises to the cytoplasm. The protein resides in the nucleus. In terms of biological role, ribosomal protein P0 is the functional equivalent of E.coli protein L10. The polypeptide is Large ribosomal subunit protein uL10 (RpLP0) (Drosophila melanogaster (Fruit fly)).